Here is a 950-residue protein sequence, read N- to C-terminus: Nonsense-mediated mRNA decay factor SMG8 (950 aa).

2 disordered regions span residues 560 to 607 (HTGK…LSPT) and 624 to 651 (NESQ…ADTE). A compositionally biased stretch (acidic residues) spans 568 to 582 (QDEDGEEDAEDEEGQ). Positions 593 to 607 (QNTASNGCSQPLSPT) are enriched in polar residues. A compositionally biased stretch (low complexity) spans 624–648 (NESQASSEQLSNSEQNSTSSGTSSA).

The protein belongs to the SMG8 family.

Its function is as follows. Involved in nonsense-mediated decay (NMD) of mRNAs containing premature stop codons. Probable component of kinase complex containing nonC and recruited to stalled ribosomes. The sequence is that of Nonsense-mediated mRNA decay factor SMG8 from Drosophila yakuba (Fruit fly).